The primary structure comprises 387 residues: Exodeoxyribonuclease 7 large subunit (387 aa).

It belongs to the XseA family. In terms of assembly, heterooligomer composed of large and small subunits.

Its subcellular location is the cytoplasm. The catalysed reaction is Exonucleolytic cleavage in either 5'- to 3'- or 3'- to 5'-direction to yield nucleoside 5'-phosphates.. In terms of biological role, bidirectionally degrades single-stranded DNA into large acid-insoluble oligonucleotides, which are then degraded further into small acid-soluble oligonucleotides. The chain is Exodeoxyribonuclease 7 large subunit from Campylobacter lari (strain RM2100 / D67 / ATCC BAA-1060).